The primary structure comprises 423 residues: Diels-Alderase pyiF (423 aa).

The signal sequence occupies residues 1-17; that stretch reads MLPSFIFVYSLLATATA. N-linked (GlcNAc...) asparagine glycosylation is found at Asn60, Asn92, and Asn219.

Belongs to the Diels-Alderase family.

It functions in the pathway mycotoxin biosynthesis. In terms of biological role, diels-Alderase; part of the gene cluster that mediates the biosynthesis of the mycotoxin pyrichalasin H, a tyrosine-derived cytochalasan that inhibits the growth of rice seedlings, but also inhibits lymphocyte capping and actin polymerization and alters cell morphology. Pyrichalasin H is indicated as the responsible agent for the genus-specific pathogenicity of M.grisea toward crabgrass. The first step in the pathway is catalyzed by the O-methyltransferase pyiA which methylates free tyrosine to generate the precursor O-methyltyrosine. The hybrid PKS-NRPS pyiS, assisted by the enoyl reductase pyiC, are responsible for fusion of the O-methyltyrosine precursor and the polyketide backbone. The polyketide synthase module (PKS) of pyiS is responsible for the synthesis of the polyketide backbone and the downstream nonribosomal peptide synthetase (NRPS) amidates the carboxyl end of the polyketide with the O-methyltyrosine precursor. As the NRPS A-domain demonstrates substrate tolerance, pyiS can also use phenylalanine, tyrosine and even para-chlorophenylalanine as amino acid precursor, which leads to the production of novel cytochalasans, including halogenated cytochalasans. Because pyiS lacks a designated enoylreductase (ER) domain, the required activity is provided the enoyl reductase pyiC. Reduction by the hydrolyase pyiE leads to 1,5-dihydropyrrolone, which is substrate for dehydration and intra-molecular Diels-Alder cyclization by the Diels-Alderase pyiF to yield the required isoindolone-fused macrocycle. The tailoring cytochrome P450 monooxygenases piyD and piyG catalyze the hydroxylation at C-18 and C-7, respectivily, whereas the short-chain dehydrogenase/reductase pyiH reduces the carbonyl at C-21 in preparation for the transfer of an acetyl group by the acetyltransferase pyiB. These 3 reactions whose order is not clear yet, lead to the production of O-methylpyrichalasin J, a deacetylated pyrichalasin H. Finally, pyiB to converts O-methylpyrichalasin J into the final product pyrichalasin H via acetylation of C-21. In Pyricularia grisea (Crabgrass-specific blast fungus), this protein is Diels-Alderase pyiF.